We begin with the raw amino-acid sequence, 224 residues long: Non-structural protein V (224 aa).

Residues 55 to 65 (KNIQYPTTSHQ) are compositionally biased toward polar residues. 2 disordered regions span residues 55–90 (KNIQYPTTSHQGSKSKGRGSGARPIIVSSSEGGTGG) and 145–172 (TSTPVTEFKRGAGSGCSRPDNPRGGHRR). The Zn(2+) site is built by H170, C189, C193, C205, C207, C210, C214, and C217.

This sequence belongs to the paramyxoviruses V protein family. In terms of assembly, interacts with host IFIH1/MDA5 and DHX58/LGP2. Forms with host DDB1, CUL4A, STAT1, STAT2 and STAT3 the mumps virus V-dependent complex (VDC).

It is found in the virion. Its subcellular location is the host cytoplasm. Functionally, plays an essential role in the inhibition of host immune response. Prevents the establishment of cellular antiviral state by blocking interferon-alpha/beta (IFN-alpha/beta) production and signaling pathway. Interacts with host IFIH1/MDA5 and DHX58/LGP2 to inhibit the transduction pathway involved in the activation of IFN-beta promoter, thus protecting the virus against cell antiviral state. Blocks the type I and II interferon signaling pathways by interacting with host STAT1, STAT2 and STAT3, and mediating their ubiquitination and subsequent proteasomal degradation. The chain is Non-structural protein V from Mumps virus genotype B (strain Miyahara vaccine) (MuV).